Reading from the N-terminus, the 236-residue chain is Ras-related protein RabY (236 aa).

18-25 contacts GTP; it reads GDRKTGKT. Residues 40-48 carry the Effector region motif; it reads YRQTNLLHF. Residues 66 to 70 and 126 to 129 each bind GTP; these read DSQAD and NKSD. Positions 192-225 are enriched in low complexity; that stretch reads QQQQQQQQQQQQQQQQQQQQQQQQQQQQQQQHQQ. The disordered stretch occupies residues 192–236; that stretch reads QQQQQQQQQQQQQQQQQQQQQQQQQQQQQQQHQQSSKTKIGCLIQ. Cysteine 233 is modified (cysteine methyl ester). Cysteine 233 is lipidated: S-geranylgeranyl cysteine. Residues 234–236 constitute a propeptide, removed in mature form; the sequence is LIQ.

This sequence belongs to the small GTPase superfamily. Rab family.

It localises to the cell membrane. This chain is Ras-related protein RabY (rabY), found in Dictyostelium discoideum (Social amoeba).